Here is a 513-residue protein sequence, read N- to C-terminus: Keratin, type II cuticular Hb2 (513 aa).

The tract at residues 1 to 120 (MSYHSFQPGS…PTVQRVKRDE (120 aa)) is head. The IF rod domain occupies 120–431 (EKEQIKCLNN…RLLEGEEHRL (312 aa)). The coil 1A stretch occupies residues 121-155 (KEQIKCLNNRFASFINKVRFLEQKNKLLETKWNFM). The interval 156 to 165 (QQQRCCQTNI) is linker 1. Residues 166–266 (EPIFEGYISA…YEEEICLLQS (101 aa)) are coil 1B. The linker 12 stretch occupies residues 267–283 (QISETSVIVKMDNSREL). The coil 2 stretch occupies residues 284 to 427 (DVDGIIAEIK…ATYRRLLEGE (144 aa)). Residues 428–513 (EHRLCEGIGP…AGGSSPSHKH (86 aa)) form a tail region.

It belongs to the intermediate filament family. As to quaternary structure, heterotetramer of two type I and two type II keratins.

This chain is Keratin, type II cuticular Hb2 (KRT82), found in Homo sapiens (Human).